The following is a 1239-amino-acid chain: Codanin-1 (1239 aa).

An N-acetylalanine modification is found at Ala2. The span at 61-72 shows a compositional bias: polar residues; sequence SRVLPQGPSTPA. 2 disordered regions span residues 61-249 and 261-299; these read SRVL…PPGC and KART…ADPA. At Thr70 the chain carries Phosphothreonine. Composition is skewed to low complexity over residues 77 to 88, 95 to 116, and 138 to 179; these read ASAALPARQGAP, ARSQ…PLAR, and GAAE…LSNL. Residues 193–213 are interaction with ASF1A/B; that stretch reads AGRTKPSRRINPTPVSEERSL. Residues 219-238 show a composition bias toward polar residues; it reads CFTSPPISCVPSSQPSTLDT. Ser270 carries the phosphoserine modification. Helical transmembrane passes span 317 to 337 and 631 to 651; these read CIAE…LQLL and FAVV…VAFL.

As to quaternary structure, interacts with ASF1A and ASF1B. Found in a cytosolic complex with ASF1A, ASF1B, IPO4 and histones H3.1 and H4. As to expression, widely expressed in adult mice, the highest levels can be measured in erythropoietic cells.

Its subcellular location is the cytoplasm. It is found in the nucleus. The protein localises to the membrane. Its function is as follows. May act as a negative regulator of ASF1 in chromatin assembly. In Mus musculus (Mouse), this protein is Codanin-1 (Cdan1).